The following is a 514-amino-acid chain: Peptide chain release factor 3 (514 aa).

The region spanning 8–268 (KKRRTFAIIS…TFLKFAPEPH (261 aa)) is the tr-type G domain. GTP-binding positions include 17–24 (SHPDAGKT), 85–89 (DTPGH), and 139–142 (NKLD).

It belongs to the TRAFAC class translation factor GTPase superfamily. Classic translation factor GTPase family. PrfC subfamily.

It is found in the cytoplasm. Its function is as follows. Increases the formation of ribosomal termination complexes and stimulates activities of RF-1 and RF-2. It binds guanine nucleotides and has strong preference for UGA stop codons. It may interact directly with the ribosome. The stimulation of RF-1 and RF-2 is significantly reduced by GTP and GDP, but not by GMP. This is Peptide chain release factor 3 from Streptococcus gordonii (strain Challis / ATCC 35105 / BCRC 15272 / CH1 / DL1 / V288).